We begin with the raw amino-acid sequence, 316 residues long: Lipoyl synthase (316 aa).

The span at 1–19 shows a compositional bias: basic and acidic residues; the sequence is MRDLKIPEQRHPEKAHRPD. Positions 1-31 are disordered; it reads MRDLKIPEQRHPEKAHRPDNAQPKKPSWIRV. Residues Cys-55, Cys-60, Cys-66, Cys-81, Cys-85, Cys-88, and Ser-295 each contribute to the [4Fe-4S] cluster site. One can recognise a Radical SAM core domain in the interval 67 to 284; sequence WSQGHATMMI…EKAAYGKGFL (218 aa).

It belongs to the radical SAM superfamily. Lipoyl synthase family. It depends on [4Fe-4S] cluster as a cofactor.

It localises to the cytoplasm. The enzyme catalyses [[Fe-S] cluster scaffold protein carrying a second [4Fe-4S](2+) cluster] + N(6)-octanoyl-L-lysyl-[protein] + 2 oxidized [2Fe-2S]-[ferredoxin] + 2 S-adenosyl-L-methionine + 4 H(+) = [[Fe-S] cluster scaffold protein] + N(6)-[(R)-dihydrolipoyl]-L-lysyl-[protein] + 4 Fe(3+) + 2 hydrogen sulfide + 2 5'-deoxyadenosine + 2 L-methionine + 2 reduced [2Fe-2S]-[ferredoxin]. Its pathway is protein modification; protein lipoylation via endogenous pathway; protein N(6)-(lipoyl)lysine from octanoyl-[acyl-carrier-protein]: step 2/2. Functionally, catalyzes the radical-mediated insertion of two sulfur atoms into the C-6 and C-8 positions of the octanoyl moiety bound to the lipoyl domains of lipoate-dependent enzymes, thereby converting the octanoylated domains into lipoylated derivatives. The sequence is that of Lipoyl synthase from Ruegeria sp. (strain TM1040) (Silicibacter sp.).